A 259-amino-acid chain; its full sequence is L-arginine-binding protein (259 aa).

Positions 1 to 21 are cleaved as a signal peptide; it reads MKKLALLGALALSVLSLPTFA.

Belongs to the bacterial solute-binding protein 3 family.

The protein resides in the periplasm. Its function is as follows. Binds L-arginine with high affinity. Shows no measurable affinity for L-ornithine. The polypeptide is L-arginine-binding protein (Pseudomonas aeruginosa (strain ATCC 15692 / DSM 22644 / CIP 104116 / JCM 14847 / LMG 12228 / 1C / PRS 101 / PAO1)).